The following is a 205-amino-acid chain: Small ribosomal subunit protein uS4 (205 aa).

The tract at residues 17–46 (ENIWGRPKSPVNKREYGPGQHGQRRKGKLS) is disordered. In terms of domain architecture, S4 RNA-binding spans 94 to 157 (SRLDAVVYRA…KQLVIVLESV (64 aa)).

This sequence belongs to the universal ribosomal protein uS4 family. Part of the 30S ribosomal subunit. Contacts protein S5. The interaction surface between S4 and S5 is involved in control of translational fidelity.

Its function is as follows. One of the primary rRNA binding proteins, it binds directly to 16S rRNA where it nucleates assembly of the body of the 30S subunit. Functionally, with S5 and S12 plays an important role in translational accuracy. The protein is Small ribosomal subunit protein uS4 of Mesorhizobium japonicum (strain LMG 29417 / CECT 9101 / MAFF 303099) (Mesorhizobium loti (strain MAFF 303099)).